Consider the following 493-residue polypeptide: Transcript termination protein A18 (493 aa).

The 157-residue stretch at 100-256 (MIELKRPLYI…NSIINIAKLS (157 aa)) folds into the Helicase ATP-binding domain. 113–120 (LACGFGKT) contacts ATP. The DESH box motif lies at 206 to 209 (DESH).

It belongs to the helicase family. Poxviruses subfamily. In terms of assembly, interacts with G2. Might be part of a transcription complex composed at least of G2, A18, and H5.

Its subcellular location is the virion. Its function is as follows. DNA helicase which seems to act as a postreplicative transcription termination factor. Involved in ATP-dependent release of nascent RNA. Forms a stable complex with single-stranded DNA, and to a lesser extent RNA. This chain is Transcript termination protein A18, found in Camelus.